The chain runs to 162 residues: uncharacterized protein (162 aa).

It belongs to the LOR family.

This is an uncharacterized protein from Bacillus subtilis (strain 168).